Here is a 919-residue protein sequence, read N- to C-terminus: Protein phosphatase 1 regulatory subunit 37 (919 aa).

LRR repeat units follow at residues 340–361 (SLQY…FVAR), 368–388 (SLTV…MLLA), 396–417 (NLRE…AQLG), 425–445 (NIQI…AYVC), 454–474 (GLVT…GYLA), and 482–502 (SLET…HKLK). Disordered stretches follow at residues 626-716 (ATED…TIPS) and 790-866 (APSQ…APLP). Over residues 631–640 (THEEEEEEEA) the composition is skewed to acidic residues. A compositionally biased stretch (basic and acidic residues) spans 641-658 (SPLKKIEEETTDALKDAT). Residues 677–690 (PQDDSDSDTEDEET) show a composition bias toward acidic residues. A compositionally biased stretch (low complexity) spans 691-701 (PTNTSLTSTSP). Polar residues-rich tracts occupy residues 791-801 (PSQTQNSTQPT) and 811-837 (DAQQ…LTES). Residues 833–861 (QLTESVSEEEQKKAETLNNEADINEDANT) adopt a coiled-coil conformation.

The protein belongs to the PPP1R37 family.

Functionally, may inhibit phosphatase activity of protein phosphatase 1 (PP1) complexes. In Danio rerio (Zebrafish), this protein is Protein phosphatase 1 regulatory subunit 37 (ppp1r37).